The chain runs to 103 residues: Gene 56 protein (103 aa).

The region spanning 9 to 103 (WDGAHVRTLF…DYYTASETGL (95 aa)) is the Glutaredoxin domain.

In Mycobacterium phage L5 (Mycobacteriophage L5), this protein is Gene 56 protein (56).